The following is a 141-amino-acid chain: MLSPRRTKFRKQQRGRMEGLAHRGSTLNFGDFALQAQEPAWITSRQIEASRRAMTRYIRRGGQIWIRIFPDKPVTMRPAETRMGSGKGNPEFWVAVVKPGRILFEIAGVSEEVAREAMRLAAYKLPIKTKFIVRPQVQEQE.

The protein belongs to the universal ribosomal protein uL16 family. In terms of assembly, part of the 50S ribosomal subunit.

In terms of biological role, binds 23S rRNA and is also seen to make contacts with the A and possibly P site tRNAs. In Microchaete diplosiphon (Fremyella diplosiphon), this protein is Large ribosomal subunit protein uL16.